Reading from the N-terminus, the 234-residue chain is Superoxide dismutase [Mn], mitochondrial (234 aa).

The transit peptide at 1-34 (MFSIRSSSRVLLKASSATTRATLNAAASKTFTRS) directs the protein to the mitochondrion. Residues histidine 60, histidine 108, aspartate 198, and histidine 202 each coordinate Mn(2+).

It belongs to the iron/manganese superoxide dismutase family. As to quaternary structure, homotetramer. Mn(2+) serves as cofactor.

The protein resides in the mitochondrion matrix. The catalysed reaction is 2 superoxide + 2 H(+) = H2O2 + O2. Functionally, destroys superoxide anion radicals which are normally produced within the cells and which are toxic to biological systems. This chain is Superoxide dismutase [Mn], mitochondrial (SOD2), found in Candida albicans (Yeast).